The chain runs to 1479 residues: WASH complex subunit 2 (1479 aa).

Positions 1–17 (MPEEQPQQQQQPVREQP) are enriched in low complexity. Disordered regions lie at residues 1–25 (MPEEQPQQQQQPVREQPSNPDDVPW), 188–210 (GGLVEGGEQAGTDAQPSANTEKK), 240–564 (FIED…GGVK), 576–1383 (FSGK…FDDI), and 1419–1479 (TSTT…NLFD). Acidic residues predominate over residues 242–279 (EDSDSDSSDEEDEEDVDAEDGSDESSSESSSDDDDEKD). The segment covering 334-349 (SKKSSNSYTSSLSDIL) has biased composition (low complexity). Residues 422–431 (DDDLFGDSEE) are compositionally biased toward acidic residues. Low complexity-rich tracts occupy residues 465-475 (TTTSSQPQQKK) and 514-532 (TPKPKSTTTSAAPTATTTK). The residue at position 535 (threonine 535) is a Phosphothreonine. The span at 542 to 552 (ASGSESTTGKS) shows a compositional bias: polar residues. Residues 595-620 (TESKASEDDFFSSDKKSTSATKKDAE) show a composition bias toward basic and acidic residues. Positions 709–723 (PKAPTTATTTTTTKP) are enriched in low complexity. Residues 765 to 781 (TETKKQPITEEPKKKQD) are compositionally biased toward basic and acidic residues. A compositionally biased stretch (polar residues) spans 802-814 (ASISPASPVSTIE). Basic and acidic residues predominate over residues 839 to 885 (DLTKDEPAKSEPTKVEPTKVEPTKAEPTKVEPAKVEPTKVESDKKES). Polar residues predominate over residues 904–916 (KNPTTSSSTTATE). The segment covering 951–968 (SSTTKKSTTTTTTTTSSK) has biased composition (low complexity). The span at 981 to 990 (KKVEEKKSSD) shows a compositional bias: basic and acidic residues. 2 stretches are compositionally biased toward low complexity: residues 991–1000 (FDSFFSGSDD) and 1010–1021 (KTTTTPPLTSTT). The span at 1062–1075 (PLTSNNTKNRTKSI) shows a compositional bias: polar residues. A compositionally biased stretch (basic and acidic residues) spans 1091–1107 (EKNRSESPTSEKAEPTK). Positions 1108 to 1123 (KTSNISSLQNKLSLNP) are enriched in polar residues. Positions 1147–1162 (STNNDNDSSATDLSDS) are enriched in low complexity. Polar residues-rich tracts occupy residues 1163 to 1174 (GRSSPSVTSPTL) and 1220 to 1236 (KSGTSAPNRSESPTPTQ). At serine 1249 the chain carries Phosphoserine. Residues 1277–1292 (EKTSSGKSSPSPTIKS) show a composition bias toward low complexity. The span at 1307–1317 (ASTTTKPTASE) shows a compositional bias: polar residues. Positions 1327–1358 (KKSEPETPKETPKETPKEKEQTKEKEQPKETP) are enriched in basic and acidic residues. Low complexity-rich tracts occupy residues 1419–1445 (TSTTSKSTTTTTTTTTTKAKSTKAVDN) and 1452–1466 (NTTTKATPTKATPSK).

It belongs to the FAM21 family. In terms of assembly, probable component of the WASH complex.

The chain is WASH complex subunit 2 from Dictyostelium discoideum (Social amoeba).